The following is a 495-amino-acid chain: Putative aldehyde dehydrogenase DhaS (495 aa).

Glycine 244 to glycine 249 serves as a coordination point for NAD(+). Residues glutamate 266 and cysteine 300 contribute to the active site.

The protein belongs to the aldehyde dehydrogenase family.

It catalyses the reaction an aldehyde + NAD(+) + H2O = a carboxylate + NADH + 2 H(+). The polypeptide is Putative aldehyde dehydrogenase DhaS (dhaS) (Bacillus subtilis (strain 168)).